We begin with the raw amino-acid sequence, 393 residues long: Protein TsgA (393 aa).

Transmembrane regions (helical) follow at residues 11–31 (WISF…GMVM), 51–71 (FLNA…EIVP), 78–98 (FGFL…SLAL), 101–121 (AAMF…TFLI), 134–154 (LLFT…IAAF), 162–182 (WYWV…LTFG), 206–226 (IGVL…LGFI), 245–265 (TLVS…SFIL), 273–293 (ILTV…TGTP), 297–317 (AWSI…IITL), 332–352 (FVLT…GPIV), and 361–381 (LLTA…LGFV).

It belongs to the major facilitator superfamily. TsgA family.

The protein resides in the cell inner membrane. The sequence is that of Protein TsgA from Shigella dysenteriae serotype 1 (strain Sd197).